The sequence spans 243 residues: Zinc import ATP-binding protein ZnuC (243 aa).

The ABC transporter domain occupies 4–219 (ITVENLSVRY…PEYRALFGTG (216 aa)). Position 36–43 (36–43 (GPNGSGKT)) interacts with ATP.

Belongs to the ABC transporter superfamily. Zinc importer (TC 3.A.1.15.5) family. The complex is composed of two ATP-binding proteins (ZnuC), two transmembrane proteins (ZnuB) and a solute-binding protein (ZnuA).

It localises to the cell inner membrane. It catalyses the reaction Zn(2+)(out) + ATP(in) + H2O(in) = Zn(2+)(in) + ADP(in) + phosphate(in) + H(+)(in). Part of the ABC transporter complex ZnuABC involved in zinc import. Responsible for energy coupling to the transport system. This chain is Zinc import ATP-binding protein ZnuC, found in Jannaschia sp. (strain CCS1).